The primary structure comprises 232 residues: Flagellar L-ring protein (232 aa).

The N-terminal stretch at 1-21 (MQKNAAHTYAISSLLVLSLTG) is a signal peptide. Cys22 carries the N-palmitoyl cysteine lipid modification. Residue Cys22 is the site of S-diacylglycerol cysteine attachment.

Belongs to the FlgH family. In terms of assembly, the basal body constitutes a major portion of the flagellar organelle and consists of four rings (L,P,S, and M) mounted on a central rod.

Its subcellular location is the cell outer membrane. The protein resides in the bacterial flagellum basal body. In terms of biological role, assembles around the rod to form the L-ring and probably protects the motor/basal body from shearing forces during rotation. The sequence is that of Flagellar L-ring protein from Shigella boydii serotype 18 (strain CDC 3083-94 / BS512).